Reading from the N-terminus, the 271-residue chain is MLATSDLWFRYQDEPVLKGLNLDFSLSPVTGLVGANGCGKSTLFMNLSGLLRPQKGAVLWQGKPLDYSKRGLLALRQQVATVFQDPEQQIFYTDIDSDIAFSLRNLGVPEAEITRRVDEALTLVDAQHFRHQPIQCLSHGQKKRVAIAGALVLQARYLLLDEPTAGLDPAGRTQMIAIIRRIVAQGNHVIISSHDIDLIYEISDAVYVLRQGQILMHGAPGEVFACTEAMEHAGLTQPWLVKLHTQLGLPLCKTETEFFHRMQKCAFKEAS.

One can recognise an ABC transporter domain in the interval 2–236 (LATSDLWFRY…TEAMEHAGLT (235 aa)). Residue 34-41 (GANGCGKS) participates in ATP binding.

The protein belongs to the ABC transporter superfamily. Cobalt importer (TC 3.A.1.18.1) family. In terms of assembly, forms an energy-coupling factor (ECF) transporter complex composed of an ATP-binding protein (A component, CbiO), a transmembrane protein (T component, CbiQ) and 2 possible substrate-capture proteins (S components, CbiM and CbiN) of unknown stoichimetry.

The protein resides in the cell inner membrane. The protein operates within cofactor biosynthesis; adenosylcobalamin biosynthesis. Functionally, part of the energy-coupling factor (ECF) transporter complex CbiMNOQ involved in cobalt import. Presumably responsible for energy coupling to the transport system. The sequence is that of Cobalt import ATP-binding protein CbiO from Salmonella paratyphi A (strain ATCC 9150 / SARB42).